Here is a 402-residue protein sequence, read N- to C-terminus: 1-deoxy-D-xylulose 5-phosphate reductoisomerase (402 aa).

NADPH-binding residues include threonine 13, glycine 14, serine 15, isoleucine 16, and asparagine 126. A 1-deoxy-D-xylulose 5-phosphate-binding site is contributed by lysine 127. Residue glutamate 128 coordinates NADPH. Residue aspartate 152 coordinates Mn(2+). Residues serine 153, glutamate 154, serine 188, and histidine 211 each contribute to the 1-deoxy-D-xylulose 5-phosphate site. Mn(2+) is bound at residue glutamate 154. Residue glycine 217 participates in NADPH binding. 4 residues coordinate 1-deoxy-D-xylulose 5-phosphate: serine 224, asparagine 229, lysine 230, and glutamate 233. Glutamate 233 contributes to the Mn(2+) binding site.

Belongs to the DXR family. Requires Mg(2+) as cofactor. Mn(2+) is required as a cofactor.

The enzyme catalyses 2-C-methyl-D-erythritol 4-phosphate + NADP(+) = 1-deoxy-D-xylulose 5-phosphate + NADPH + H(+). The protein operates within isoprenoid biosynthesis; isopentenyl diphosphate biosynthesis via DXP pathway; isopentenyl diphosphate from 1-deoxy-D-xylulose 5-phosphate: step 1/6. Functionally, catalyzes the NADPH-dependent rearrangement and reduction of 1-deoxy-D-xylulose-5-phosphate (DXP) to 2-C-methyl-D-erythritol 4-phosphate (MEP). In Psychrobacter cryohalolentis (strain ATCC BAA-1226 / DSM 17306 / VKM B-2378 / K5), this protein is 1-deoxy-D-xylulose 5-phosphate reductoisomerase.